A 192-amino-acid polypeptide reads, in one-letter code: Ribosomal RNA small subunit methyltransferase G (192 aa).

S-adenosyl-L-methionine contacts are provided by residues Gly63, Phe68, 112-113, and Arg125; that span reads IE.

The protein belongs to the methyltransferase superfamily. RNA methyltransferase RsmG family.

It localises to the cytoplasm. It catalyses the reaction guanosine(527) in 16S rRNA + S-adenosyl-L-methionine = N(7)-methylguanosine(527) in 16S rRNA + S-adenosyl-L-homocysteine. In terms of biological role, specifically methylates the N7 position of guanine in position 527 of 16S rRNA. The sequence is that of Ribosomal RNA small subunit methyltransferase G from Rickettsia felis (strain ATCC VR-1525 / URRWXCal2) (Rickettsia azadi).